The chain runs to 117 residues: Large ribosomal subunit protein uL18 (117 aa).

It belongs to the universal ribosomal protein uL18 family. In terms of assembly, part of the 50S ribosomal subunit; part of the 5S rRNA/L5/L18/L25 subcomplex. Contacts the 5S and 23S rRNAs.

This is one of the proteins that bind and probably mediate the attachment of the 5S RNA into the large ribosomal subunit, where it forms part of the central protuberance. The protein is Large ribosomal subunit protein uL18 of Actinobacillus pleuropneumoniae serotype 5b (strain L20).